The sequence spans 638 residues: Chaperone protein DnaK (638 aa).

Phosphothreonine; by autocatalysis is present on Thr197. The interval 600–638 (SGAQGGAQAGPGAGAGQQANQGSSNNKEDIQDADFEEVK) is disordered. The span at 602 to 614 (AQGGAQAGPGAGA) shows a compositional bias: gly residues. The segment covering 615–624 (GQQANQGSSN) has biased composition (low complexity). Over residues 625 to 638 (NKEDIQDADFEEVK) the composition is skewed to basic and acidic residues.

Belongs to the heat shock protein 70 family.

In terms of biological role, acts as a chaperone. This chain is Chaperone protein DnaK, found in Phocaeicola vulgatus (strain ATCC 8482 / DSM 1447 / JCM 5826 / CCUG 4940 / NBRC 14291 / NCTC 11154) (Bacteroides vulgatus).